We begin with the raw amino-acid sequence, 59 residues long: Ribosome biogenesis protein Nop10 (59 aa).

Belongs to the NOP10 family.

Functionally, involved in ribosome biogenesis; more specifically in 18S rRNA pseudouridylation and in cleavage of pre-rRNA. In Thermococcus gammatolerans (strain DSM 15229 / JCM 11827 / EJ3), this protein is Ribosome biogenesis protein Nop10.